The primary structure comprises 438 residues: Indole diterpene prenyltransferase paxD (438 aa).

Residue 80–81 (FM) participates in L-tryptophan binding. Substrate-binding residues include Arg102, Lys190, Arg264, Lys266, Tyr268, Tyr349, and Tyr418.

Belongs to the tryptophan dimethylallyltransferase family.

It functions in the pathway secondary metabolite biosynthesis. Indole diterpene prenyltransferase; part of the gene cluster that mediates the biosynthesis of paxilline, a mycotoxin that acts as an inhibitor of mammalian maxi-K channels. PaxG, the geranylgeranyl diphosphate (GGPP) synthase is proposed to catalyze the first step in paxilline biosynthesis. Condensation of indole-3-glycerol phosphate with GGPP by paxC then forms 3-geranylgeranylindole (3-GGI), followed by epoxidation and cyclization of this intermediate (by paxM and paxB) to form paspaline. Paspaline is subsequently converted to 13-desoxypaxilline by paxP, the latter being then converted to paxilline by paxQ. Finally paxilline can be mono- and di-prenylated by paxD. The chain is Indole diterpene prenyltransferase paxD from Penicillium paxilli.